We begin with the raw amino-acid sequence, 497 residues long: MAGGIEITFEPLSSRGTGGDLVVFVGDDLALSGAASEALGQPGTELVARAAASERFKGKAQSALVLPAPAGVEADRLVVIGLGSEKDRAKIDWTVLGGFTAGKVGARSARVVIDGPGFAASARDVADFTLGARLRSYRFDQYKTKKKDEDEAGAALTLRVADPSGAQAAARSAEAVAEGVILARNLVNEPPNVLYPEEYARRVSELTQLGVEVEILDVARMKEIGMGALLAVAQGSAREPRVVIMRWNGADDAAEPPLALIGKGVVFDSGGVSIKSAGGMEDMKGDMGGSAAVVGTLHALASRKAKANVIGAIGIVENMPDGAAYRPSDIVTSLSGQTIEVINTDAEGRLVLADVLWHIQATYKPKAMIDLATLTGAIIVALGQDIAGLFSNDDALSGQITAAGEAAGEKVWRMPLIPAFDKAIDSKFADMKNTGGRHGGAATAAAFLKRYVNDVPWAHLDIAGVGMSSTPSEINRSWGAGWGVRLLDRLVREHYER.

Mn(2+)-binding residues include K263 and D268. K275 is a catalytic residue. D286, D345, and E347 together coordinate Mn(2+). Residue R349 is part of the active site.

The protein belongs to the peptidase M17 family. The cofactor is Mn(2+).

The protein resides in the cytoplasm. The catalysed reaction is Release of an N-terminal amino acid, Xaa-|-Yaa-, in which Xaa is preferably Leu, but may be other amino acids including Pro although not Arg or Lys, and Yaa may be Pro. Amino acid amides and methyl esters are also readily hydrolyzed, but rates on arylamides are exceedingly low.. It carries out the reaction Release of an N-terminal amino acid, preferentially leucine, but not glutamic or aspartic acids.. In terms of biological role, presumably involved in the processing and regular turnover of intracellular proteins. Catalyzes the removal of unsubstituted N-terminal amino acids from various peptides. The polypeptide is Probable cytosol aminopeptidase (Methylorubrum extorquens (strain CM4 / NCIMB 13688) (Methylobacterium extorquens)).